We begin with the raw amino-acid sequence, 207 residues long: Thiamine-phosphate synthase (207 aa).

4-amino-2-methyl-5-(diphosphooxymethyl)pyrimidine-binding positions include 35–39 (QYRDK) and N67. Mg(2+) contacts are provided by D68 and D86. T105 serves as a coordination point for 4-amino-2-methyl-5-(diphosphooxymethyl)pyrimidine. 132–134 (SNT) contacts 2-[(2R,5Z)-2-carboxy-4-methylthiazol-5(2H)-ylidene]ethyl phosphate. K135 contacts 4-amino-2-methyl-5-(diphosphooxymethyl)pyrimidine. G162 serves as a coordination point for 2-[(2R,5Z)-2-carboxy-4-methylthiazol-5(2H)-ylidene]ethyl phosphate.

This sequence belongs to the thiamine-phosphate synthase family. It depends on Mg(2+) as a cofactor.

It catalyses the reaction 2-[(2R,5Z)-2-carboxy-4-methylthiazol-5(2H)-ylidene]ethyl phosphate + 4-amino-2-methyl-5-(diphosphooxymethyl)pyrimidine + 2 H(+) = thiamine phosphate + CO2 + diphosphate. The enzyme catalyses 2-(2-carboxy-4-methylthiazol-5-yl)ethyl phosphate + 4-amino-2-methyl-5-(diphosphooxymethyl)pyrimidine + 2 H(+) = thiamine phosphate + CO2 + diphosphate. It carries out the reaction 4-methyl-5-(2-phosphooxyethyl)-thiazole + 4-amino-2-methyl-5-(diphosphooxymethyl)pyrimidine + H(+) = thiamine phosphate + diphosphate. It functions in the pathway cofactor biosynthesis; thiamine diphosphate biosynthesis; thiamine phosphate from 4-amino-2-methyl-5-diphosphomethylpyrimidine and 4-methyl-5-(2-phosphoethyl)-thiazole: step 1/1. In terms of biological role, condenses 4-methyl-5-(beta-hydroxyethyl)thiazole monophosphate (THZ-P) and 2-methyl-4-amino-5-hydroxymethyl pyrimidine pyrophosphate (HMP-PP) to form thiamine monophosphate (TMP). The sequence is that of Thiamine-phosphate synthase from Pseudomonas fluorescens (strain Pf0-1).